A 276-amino-acid polypeptide reads, in one-letter code: Large ribosomal subunit protein uL2 (276 aa).

Disordered stretches follow at residues 29-54 (PEKS…SRRR) and 224-276 (AMNP…RGQR). Positions 256-276 (YKTRSKKKPSSKLIVKRRGQR) are enriched in basic residues.

This sequence belongs to the universal ribosomal protein uL2 family. In terms of assembly, part of the 50S ribosomal subunit. Forms a bridge to the 30S subunit in the 70S ribosome.

Functionally, one of the primary rRNA binding proteins. Required for association of the 30S and 50S subunits to form the 70S ribosome, for tRNA binding and peptide bond formation. It has been suggested to have peptidyltransferase activity; this is somewhat controversial. Makes several contacts with the 16S rRNA in the 70S ribosome. The chain is Large ribosomal subunit protein uL2 from Maridesulfovibrio salexigens (strain ATCC 14822 / DSM 2638 / NCIMB 8403 / VKM B-1763) (Desulfovibrio salexigens).